The chain runs to 255 residues: RNA polymerase sigma-F factor (255 aa).

Residues 61–74 carry the Polymerase core binding motif; it reads DLFQIGCIGLLKSV. Residues 221–240 constitute a DNA-binding region (H-T-H motif); that stretch reads QSEVAERLGISQVQVSRLEK.

It belongs to the sigma-70 factor family. In terms of assembly, interacts transiently with the RNAP core.

Interaction with SpoIIAB inhibits sigma-F activity throughout the cell before the formation of the asymmetric septum; after septation the interaction is confined to the mother cell, and sigma-F activity is released in the prespore. Fin, a second, forespore-specific anti-sigma factor is induced in 2 successive waves by sigma-F and sigma-G, by antagonizing sigma-F it allows the switch to sigma-G factor and progression to the late sporulation development stages. Functionally, sigma factors are initiation factors that promote the attachment of RNA polymerase to specific initiation sites and are then released. This sigma factor is responsible for the expression of sporulation specific genes. Interaction with SpoIIAB inhibits sigma-F activity throughout the cell before the formation of the asymmetric septum; after septation the interaction is confined to the mother cell, and sigma F activity is released in the prespore. Responsible for expression of csfB (the anti-sigma-G factor Gin). Associates with the RNAP core only in stationary phase cells. In Bacillus subtilis (strain 168), this protein is RNA polymerase sigma-F factor (sigF).